The primary structure comprises 36 residues: Mating hormone A-factor 1 (36 aa).

The propeptide occupies 1-21 (MQPSTATAAPKEKTSSEKKDN). Cysteine methyl ester is present on C33. Residue C33 is the site of S-farnesyl cysteine attachment. The propeptide at 34 to 36 (VIA) is removed in mature form.

Its subcellular location is the cell membrane. In terms of biological role, the active factor is excreted into the culture medium by haploid cells of the A mating type and acts on cells of the opposite mating type (type alpha). It mediates the conjugation process between the two types by inhibiting the initiation of DNA synthesis in type alpha cells and synchronizing them with type A. In Saccharomyces cerevisiae (strain ATCC 204508 / S288c) (Baker's yeast), this protein is Mating hormone A-factor 1 (MFA1).